The chain runs to 563 residues: Beta-catenin-like protein 1 (563 aa).

Residue Met-1 is modified to N-acetylmethionine. The tract at residues Met-1–Val-49 is disordered. The Nuclear localization signal signature appears at Lys-16–Ala-33. The span at Gly-34 to Glu-45 shows a compositional bias: basic and acidic residues. HEAT repeat units lie at residues Glu-79–Thr-129 and Tyr-134–Glu-176. At Lys-91 the chain carries N6-acetyllysine. The Nuclear export signal (NES) motif lies at Met-130–Leu-140. 5 ARM repeats span residues Glu-178 to Phe-228, Arg-229 to Asn-273, Asp-274 to Leu-323, Ser-325 to Gly-363, and Pro-364 to Asn-417. Ser-389 carries the post-translational modification Phosphoserine. Residues Asp-476–Ile-540 are a coiled coil. A Phosphoserine modification is found at Ser-545.

As to quaternary structure, component of the PRP19-CDC5L splicing complex composed of a core complex comprising a homotetramer of PRPF19, CDC5L, PLRG1 and BCAS2, and at least three less stably associated proteins CTNNBL1, CWC15 and HSPA8. Interacts directly with CWC15 and CDC5L in the complex. Interacts with AICDA; the interaction is important for the antibody diversification activity of AICDA. Interacts with PRPF31 (via its NLS). Interacts (via its N-terminal NLS) with KPNA1 and KPNA2.

Its subcellular location is the nucleus. Its function is as follows. Component of the PRP19-CDC5L complex that forms an integral part of the spliceosome and is required for activating pre-mRNA splicing. Participates in AID/AICDA-mediated somatic hypermutation (SHM) and class-switch recombination (CSR), 2 processes resulting in the production of high-affinity, mutated isotype-switched antibodies. The protein is Beta-catenin-like protein 1 (CTNNBL1) of Bos taurus (Bovine).